The sequence spans 252 residues: Triosephosphate isomerase (252 aa).

A substrate-binding site is contributed by 10 to 12 (NWK). Histidine 96 (electrophile) is an active-site residue. The active-site Proton acceptor is glutamate 168. Substrate-binding positions include glycine 174, serine 214, and 235-236 (GG).

Belongs to the triosephosphate isomerase family. In terms of assembly, homodimer.

The protein resides in the cytoplasm. It catalyses the reaction D-glyceraldehyde 3-phosphate = dihydroxyacetone phosphate. It participates in carbohydrate biosynthesis; gluconeogenesis. The protein operates within carbohydrate degradation; glycolysis; D-glyceraldehyde 3-phosphate from glycerone phosphate: step 1/1. Functionally, involved in the gluconeogenesis. Catalyzes stereospecifically the conversion of dihydroxyacetone phosphate (DHAP) to D-glyceraldehyde-3-phosphate (G3P). The protein is Triosephosphate isomerase of Lactobacillus acidophilus (strain ATCC 700396 / NCK56 / N2 / NCFM).